A 277-amino-acid chain; its full sequence is Indole-3-glycerol phosphate synthase (277 aa).

Belongs to the TrpC family.

It carries out the reaction 1-(2-carboxyphenylamino)-1-deoxy-D-ribulose 5-phosphate + H(+) = (1S,2R)-1-C-(indol-3-yl)glycerol 3-phosphate + CO2 + H2O. It participates in amino-acid biosynthesis; L-tryptophan biosynthesis; L-tryptophan from chorismate: step 4/5. This chain is Indole-3-glycerol phosphate synthase, found in Pseudomonas putida (strain ATCC 700007 / DSM 6899 / JCM 31910 / BCRC 17059 / LMG 24140 / F1).